The primary structure comprises 529 residues: Putative E3 ubiquitin-protein ligase ARI4 (529 aa).

Residues 1–22 are compositionally biased toward acidic residues; sequence MDDEYMSLEEEEDNCYPSEFDD. The disordered stretch occupies residues 1-23; it reads MDDEYMSLEEEEDNCYPSEFDDH. The TRIAD supradomain stretch occupies residues 115–327; it reads KTMKCDICME…IAGHSCGRYK (213 aa). The Zn(2+) site is built by cysteine 119, cysteine 122, cysteine 137, histidine 139, cysteine 142, cysteine 145, cysteine 164, cysteine 169, cysteine 206, cysteine 212, cysteine 230, cysteine 232, cysteine 237, cysteine 240, histidine 245, cysteine 250, cysteine 277, and cysteine 280. Residues 119 to 169 form an RING-type 1 zinc finger; that stretch reads CDICMEEDLSKYAMTRMECGHRFCNDCWKEHFTVRINEGEGKRIRCMAYKC. Residues 186–250 form an IBR-type zinc finger; that stretch reads EKFDRFLIES…LSESHSPCSC (65 aa). The segment at 277–305 adopts an RING-type 2; atypical zinc-finger fold; sequence CPKCSKPIQKRDGCNHMTCKCGQHFCWLC. Cysteine 290 is an active-site residue. Positions 295, 297, 302, 305, 313, and 323 each coordinate Zn(2+).

It belongs to the RBR family. Ariadne subfamily. Zn(2+) is required as a cofactor.

The catalysed reaction is [E2 ubiquitin-conjugating enzyme]-S-ubiquitinyl-L-cysteine + [acceptor protein]-L-lysine = [E2 ubiquitin-conjugating enzyme]-L-cysteine + [acceptor protein]-N(6)-ubiquitinyl-L-lysine.. The protein operates within protein modification; protein ubiquitination. In terms of biological role, might act as an E3 ubiquitin-protein ligase, or as part of E3 complex, which accepts ubiquitin from specific E2 ubiquitin-conjugating enzymes and then transfers it to substrates. The protein is Putative E3 ubiquitin-protein ligase ARI4 (ARI4) of Arabidopsis thaliana (Mouse-ear cress).